We begin with the raw amino-acid sequence, 406 residues long: Accessory Sec system protein translocase subunit SecY2 (406 aa).

The next 10 helical transmembrane spans lie at 14 to 34, 63 to 83, 108 to 128, 131 to 151, 156 to 176, 190 to 210, 246 to 266, 285 to 305, 344 to 364, and 368 to 388; these read SWTVLFLFIYVLGSHLVLPFI, FSLFSVGLSPWMSAMILWQMF, FAIALIQSLAVSLSLPIEVGI, GLAILTNTILLIAGTFFLVWL, SFFGIGGSIVILMASMVANLP, LPIILSLIIMGLLFLYIAVIV, FMYAISLVSIPQYLLILIQIL, PIWLVLYQVVLFVLGIAFAFV, AVIGAIYTVIMAGGPMMIVLI, and YLQLSMIPGMFLIYSGMVYNV.

The protein belongs to the SecY/SEC61-alpha family. SecY2 subfamily. As to quaternary structure, component of the accessory SecA2/SecY2 protein translocase complex required to export cell wall proteins. May form heterotrimers with SecE and SecG subunits.

The protein localises to the cell membrane. Functionally, part of the accessory SecA2/SecY2 system specifically required for export of possible cell wall proteins. The central subunit of a protein translocation channel. In Streptococcus salivarius (strain CCHSS3), this protein is Accessory Sec system protein translocase subunit SecY2.